The primary structure comprises 78 residues: Small ribosomal subunit protein bS16c (78 aa).

Belongs to the bacterial ribosomal protein bS16 family.

The protein resides in the plastid. It localises to the chloroplast. The polypeptide is Small ribosomal subunit protein bS16c (Panax ginseng (Korean ginseng)).